The primary structure comprises 500 residues: Aspartyl/glutamyl-tRNA(Asn/Gln) amidotransferase subunit B (500 aa).

This sequence belongs to the GatB/GatE family. GatB subfamily. Heterotrimer of A, B and C subunits.

The catalysed reaction is L-glutamyl-tRNA(Gln) + L-glutamine + ATP + H2O = L-glutaminyl-tRNA(Gln) + L-glutamate + ADP + phosphate + H(+). The enzyme catalyses L-aspartyl-tRNA(Asn) + L-glutamine + ATP + H2O = L-asparaginyl-tRNA(Asn) + L-glutamate + ADP + phosphate + 2 H(+). Functionally, allows the formation of correctly charged Asn-tRNA(Asn) or Gln-tRNA(Gln) through the transamidation of misacylated Asp-tRNA(Asn) or Glu-tRNA(Gln) in organisms which lack either or both of asparaginyl-tRNA or glutaminyl-tRNA synthetases. The reaction takes place in the presence of glutamine and ATP through an activated phospho-Asp-tRNA(Asn) or phospho-Glu-tRNA(Gln). This is Aspartyl/glutamyl-tRNA(Asn/Gln) amidotransferase subunit B from Clavibacter sepedonicus (Clavibacter michiganensis subsp. sepedonicus).